Here is a 1286-residue protein sequence, read N- to C-terminus: Galactose/N-acetyl-D-galactosamine lectin heavy subunit 2 (1286 aa).

An N-terminal signal peptide occupies residues 1–15; that stretch reads MKLLLLNILLLCCLA. The Extracellular segment spans residues 16 to 1227; sequence DKLNEFSADI…NNVGAIAAAT (1212 aa). N-linked (GlcNAc...) asparagine glycosylation is found at N200, N331, N384, N462, N652, N883, N1197, and N1207. A helical membrane pass occupies residues 1228-1248; that stretch reads TVAVVVVAVVVALIVVSIGLF. Residues 1249–1286 lie on the Cytoplasmic side of the membrane; sequence KTYQLVSSAMKNAITTTNENAEYVGADNEATNAATYNG.

In terms of assembly, heterodimer composed of a 170 kDa heavy subunit (hgl) and a 31/35 kDa light subunit (lgl); disulfide-linked. N-glycosylated.

It is found in the cell membrane. In terms of biological role, lectin which binds galactose and N-acetyl-D-galactosamine of host glycoproteins and thus mediates adhesion to host cells. Mediates adherence to host colonic mucins, an essential step for pathogenic tissue invasion. This is Galactose/N-acetyl-D-galactosamine lectin heavy subunit 2 from Entamoeba histolytica (strain ATCC 30459 / HM-1:IMSS / ABRM).